Consider the following 204-residue polypeptide: Holliday junction branch migration complex subunit RuvA (204 aa).

The interval 1–63 (MIGKLSGKVD…EEHIHLYGFL (63 aa)) is domain I. Positions 64–142 (TLEEKIFFNL…KISSGSAIIK (79 aa)) are domain II. The tract at residues 143–149 (ESLNIKN) is flexible linker. Residues 150 to 204 (ITPVASNEVIKALVNLGFSRFEAQNAVQGIITQNPEISIDELIKTALKNRNSNFS) form a domain III region.

Belongs to the RuvA family. As to quaternary structure, homotetramer. Forms an RuvA(8)-RuvB(12)-Holliday junction (HJ) complex. HJ DNA is sandwiched between 2 RuvA tetramers; dsDNA enters through RuvA and exits via RuvB. An RuvB hexamer assembles on each DNA strand where it exits the tetramer. Each RuvB hexamer is contacted by two RuvA subunits (via domain III) on 2 adjacent RuvB subunits; this complex drives branch migration. In the full resolvosome a probable DNA-RuvA(4)-RuvB(12)-RuvC(2) complex forms which resolves the HJ.

The protein localises to the cytoplasm. Functionally, the RuvA-RuvB-RuvC complex processes Holliday junction (HJ) DNA during genetic recombination and DNA repair, while the RuvA-RuvB complex plays an important role in the rescue of blocked DNA replication forks via replication fork reversal (RFR). RuvA specifically binds to HJ cruciform DNA, conferring on it an open structure. The RuvB hexamer acts as an ATP-dependent pump, pulling dsDNA into and through the RuvAB complex. HJ branch migration allows RuvC to scan DNA until it finds its consensus sequence, where it cleaves and resolves the cruciform DNA. This is Holliday junction branch migration complex subunit RuvA from Rickettsia rickettsii (strain Iowa).